The sequence spans 154 residues: Vimentin (154 aa).

Over residues 1–13 the composition is skewed to low complexity; the sequence is MSTRSVSSSSYRR. The segment at 1–31 is disordered; that stretch reads MSTRSVSSSSYRRMFGGPGTASRPSSTRSYV. The residue at position 2 (serine 2) is an N-acetylserine. Positions 2–95 are head; it reads STRSVSSSSY…FSLADAINTE (94 aa). Serine 5 carries the phosphoserine modification. Phosphoserine; by PKA and PKC; alternate is present on serine 7. The O-linked (GlcNAc) serine; alternate glycan is linked to serine 7. Serine 8 is modified (phosphoserine). Residues serine 9 and serine 10 each carry the phosphoserine; by PKC modification. Threonine 20 is modified (phosphothreonine). Serine 25 bears the Phosphoserine; by PKA and PKC mark. Serine 26 carries the phosphoserine; by PKC modification. A glycan (O-linked (GlcNAc) threonine) is linked at threonine 33. Serine 34 is a glycosylation site (O-linked (GlcNAc) serine; alternate). A Phosphoserine; by PKC; alternate modification is found at serine 34. The residue at position 39 (serine 39) is a Phosphoserine; by CaMK2, PKA, PKC and ROCK2. Serine 42 carries the phosphoserine; by PKC modification. Serine 49 is subject to Phosphoserine. At tyrosine 53 the chain carries Phosphotyrosine. Residue serine 55 is modified to Phosphoserine. Phosphoserine; by CDK5 and CDK1 is present on serine 56. A Phosphotyrosine modification is found at tyrosine 61. Serine 66 carries the post-translational modification Phosphoserine; by PKA and PKC. Phosphoserine; by AURKB and ROCK2 is present on serine 72. Phosphoserine; by CaMK2 is present on serine 83. Residue serine 87 is modified to Phosphoserine. A coil 1A region spans residues 96–131; it reads FKNTRTNEKVELQELNDRFANYIDKVRFLEQQNKIL. Residues 96–131 are a coiled coil; it reads FKNTRTNEKVELQELNDRFANYIDKVRFLEQQNKIL. In terms of domain architecture, IF rod spans 103-154; that stretch reads EKVELQELNDRFANYIDKVRFLEQQNKILLAELEQLKGQGKSRLGHLYEEEM. A Glycyl lysine isopeptide (Lys-Gly) (interchain with G-Cter in SUMO2) cross-link involves residue lysine 104. Tyrosine 117 is modified (phosphotyrosine). Lysine 120, lysine 129, and lysine 139 each carry N6-acetyllysine; alternate. Residues lysine 120 and lysine 129 each carry the N6-succinyllysine; alternate modification. Glycyl lysine isopeptide (Lys-Gly) (interchain with G-Cter in SUMO2); alternate cross-links involve residues lysine 120, lysine 129, and lysine 139. A linker 1 region spans residues 132–153; sequence LAELEQLKGQGKSRLGHLYEEE. Residue serine 144 is modified to Phosphoserine. Residue methionine 154 is a region of interest, coil 1B.

Belongs to the intermediate filament family. Homomer assembled from elementary dimers. Identified in complexes that contain VIM, EZR, AHNAK, BFSP1, BFSP2, ANK2, PLEC, PRX and spectrin. Interacts with BCAS3. Interacts with LGSN. Interacts with SYNM. Interacts (via rod region) with PLEC (via CH 1 domain). Interacts with STK33. Interacts with LARP6. Interacts with RAB8B. Interacts with TOR1A; the interaction associates TOR1A with the cytoskeleton. Interacts with TOR1AIP1. Interacts with TOR1AIP1. Interacts with DIAPH1. Interacts with EPPK1; interaction is dependent of higher-order structure of intermediate filament. Interacts with the non-receptor tyrosine kinase SRMS; the interaction leads to phosphorylation of VIM. Interacts with NOD2. Interacts (via head region) with CORO1C. Interacts with HDGF. Interacts with PRKCE (via phorbol-ester/DAG-type 2 domain). Interacts with BFSP2. Interacts with PPL. Interacts with PKP1 and PKP2. Interacts with SCRIB (via PDZ domains); the interaction protects SCRIB from proteasomal degradation and facilitates SCRIB localization to intermediate filaments, the interaction is reduced by cell contact inhibition. In terms of processing, one of the most prominent phosphoproteins in various cells of mesenchymal origin. Phosphorylation is enhanced during cell division, at which time vimentin filaments are significantly reorganized. Phosphorylation by PKN1 inhibits the formation of filaments. Filament disassembly during mitosis is promoted by phosphorylation at Ser-55 as well as by nestin. Phosphorylated at Ser-56 by CDK5 during neutrophil secretion in the cytoplasm. Phosphorylated by STK33. Phosphorylated on tyrosine residues by SRMS.

The protein localises to the cytoplasm. It localises to the cytoskeleton. The protein resides in the nucleus matrix. Its subcellular location is the cell membrane. In terms of biological role, vimentins are class-III intermediate filaments found in various non-epithelial cells, especially mesenchymal cells. Vimentin is attached to the nucleus, endoplasmic reticulum, and mitochondria, either laterally or terminally. Plays a role in cell directional movement, orientation, cell sheet organization and Golgi complex polarization at the cell migration front. Protects SCRIB from proteasomal degradation and facilitates its localization to intermediate filaments in a cell contact-mediated manner. Functionally, involved with LARP6 in the stabilization of type I collagen mRNAs for CO1A1 and CO1A2. This Ovis aries (Sheep) protein is Vimentin (VIM).